The sequence spans 128 residues: Small ribosomal subunit protein uS13 (128 aa).

The interval 98 to 128 (VRGQRTRTNARTRKGPRPRIGVKKKGKQAGS) is disordered. The segment covering 101-128 (QRTRTNARTRKGPRPRIGVKKKGKQAGS) has biased composition (basic residues).

This sequence belongs to the universal ribosomal protein uS13 family. In terms of assembly, part of the 30S ribosomal subunit. Forms a loose heterodimer with protein S19. Forms two bridges to the 50S subunit in the 70S ribosome.

Its function is as follows. Located at the top of the head of the 30S subunit, it contacts several helices of the 16S rRNA. In the 70S ribosome it contacts the 23S rRNA (bridge B1a) and protein L5 of the 50S subunit (bridge B1b), connecting the 2 subunits; these bridges are implicated in subunit movement. Contacts the tRNAs in the A and P-sites. The chain is Small ribosomal subunit protein uS13 from Thermomicrobium roseum (strain ATCC 27502 / DSM 5159 / P-2).